The primary structure comprises 240 residues: uncharacterized protein (240 aa).

This sequence to H.influenzae HI_0575.

This is an uncharacterized protein from Escherichia coli (strain K12).